The following is a 577-amino-acid chain: Urease subunit alpha (577 aa).

Residues 136-577 enclose the Urease domain; it reads GAIDCHVHLI…LPMAQRYFLF (442 aa). Residues H141, H143, and K224 each contribute to the Ni(2+) site. Position 224 is an N6-carboxylysine (K224). Substrate is bound at residue H226. The Ni(2+) site is built by H253 and H279. H327 acts as the Proton donor in catalysis. Residue D367 participates in Ni(2+) binding.

The protein belongs to the metallo-dependent hydrolases superfamily. Urease alpha subunit family. As to quaternary structure, heterotrimer of UreA (gamma), UreB (beta) and UreC (alpha) subunits. Three heterotrimers associate to form the active enzyme. Requires Ni cation as cofactor. Carboxylation allows a single lysine to coordinate two nickel ions.

The protein localises to the cytoplasm. It carries out the reaction urea + 2 H2O + H(+) = hydrogencarbonate + 2 NH4(+). It functions in the pathway nitrogen metabolism; urea degradation; CO(2) and NH(3) from urea (urease route): step 1/1. In Mycobacterium marinum (strain ATCC BAA-535 / M), this protein is Urease subunit alpha.